The chain runs to 361 residues: Holliday junction branch migration complex subunit RuvB (361 aa).

2 stretches are compositionally biased toward polar residues: residues 1-15 and 28-40; these read MAIK…SPNV and ERST…QQEA. The segment at 1-41 is disordered; it reads MAIKRSGNNNLSPNVKSDLLSPEVIPQERSTSPELEQQEAS. Residues 13-203 are large ATPase domain (RuvB-L); it reads PNVKSDLLSP…FGLIQRLRFY (191 aa). Residues Leu-42, Arg-43, Gly-84, Lys-87, Thr-88, Thr-89, 150-152, Arg-193, Tyr-203, and Arg-240 each bind ATP; that span reads EDF. Residue Thr-88 participates in Mg(2+) binding. A small ATPAse domain (RuvB-S) region spans residues 204-274; that stretch reads EVDELQQIIL…LASEALDLYQ (71 aa). Residues 277-361 are head domain (RuvB-H); the sequence is KRGLDWTDRL…PTPLLPWKES (85 aa). DNA-binding residues include Arg-332 and Arg-337.

The protein belongs to the RuvB family. As to quaternary structure, homohexamer. Forms an RuvA(8)-RuvB(12)-Holliday junction (HJ) complex. HJ DNA is sandwiched between 2 RuvA tetramers; dsDNA enters through RuvA and exits via RuvB. An RuvB hexamer assembles on each DNA strand where it exits the tetramer. Each RuvB hexamer is contacted by two RuvA subunits (via domain III) on 2 adjacent RuvB subunits; this complex drives branch migration. In the full resolvosome a probable DNA-RuvA(4)-RuvB(12)-RuvC(2) complex forms which resolves the HJ.

The protein resides in the cytoplasm. It carries out the reaction ATP + H2O = ADP + phosphate + H(+). Functionally, the RuvA-RuvB-RuvC complex processes Holliday junction (HJ) DNA during genetic recombination and DNA repair, while the RuvA-RuvB complex plays an important role in the rescue of blocked DNA replication forks via replication fork reversal (RFR). RuvA specifically binds to HJ cruciform DNA, conferring on it an open structure. The RuvB hexamer acts as an ATP-dependent pump, pulling dsDNA into and through the RuvAB complex. RuvB forms 2 homohexamers on either side of HJ DNA bound by 1 or 2 RuvA tetramers; 4 subunits per hexamer contact DNA at a time. Coordinated motions by a converter formed by DNA-disengaged RuvB subunits stimulates ATP hydrolysis and nucleotide exchange. Immobilization of the converter enables RuvB to convert the ATP-contained energy into a lever motion, pulling 2 nucleotides of DNA out of the RuvA tetramer per ATP hydrolyzed, thus driving DNA branch migration. The RuvB motors rotate together with the DNA substrate, which together with the progressing nucleotide cycle form the mechanistic basis for DNA recombination by continuous HJ branch migration. Branch migration allows RuvC to scan DNA until it finds its consensus sequence, where it cleaves and resolves cruciform DNA. In terms of biological role, participates in UV-tolerance of Synechocystis PCC 6803. The chain is Holliday junction branch migration complex subunit RuvB from Synechocystis sp. (strain ATCC 27184 / PCC 6803 / Kazusa).